A 390-amino-acid chain; its full sequence is Alanine racemase (390 aa).

Residue lysine 37 is the Proton acceptor; specific for D-alanine of the active site. At lysine 37 the chain carries N6-(pyridoxal phosphate)lysine. Arginine 135 contacts substrate. Tyrosine 274 acts as the Proton acceptor; specific for L-alanine in catalysis. Methionine 322 serves as a coordination point for substrate.

The protein belongs to the alanine racemase family. It depends on pyridoxal 5'-phosphate as a cofactor.

It carries out the reaction L-alanine = D-alanine. The protein operates within amino-acid biosynthesis; D-alanine biosynthesis; D-alanine from L-alanine: step 1/1. Its function is as follows. Catalyzes the interconversion of L-alanine and D-alanine. May also act on other amino acids. The chain is Alanine racemase (alr) from Desulfosudis oleivorans (strain DSM 6200 / JCM 39069 / Hxd3) (Desulfococcus oleovorans).